Consider the following 93-residue polypeptide: Uteroglobin (93 aa).

Residues 1–17 (MKLAITIILVMLSVCYS) form the signal peptide.

It belongs to the secretoglobin family. As to quaternary structure, antiparallel homodimer; disulfide-linked. Interaction with LMBR1L is controversial.

The protein resides in the secreted. In terms of biological role, binds phosphatidylcholine, phosphatidylinositol, polychlorinated biphenyls (PCB) and weakly progesterone, potent inhibitor of phospholipase A2. The protein is Uteroglobin (SCGB1A1) of Neotomodon alstoni (Mexican volcano mouse).